A 273-amino-acid chain; its full sequence is ATP synthase subunit delta (273 aa).

This sequence belongs to the ATPase delta chain family. In terms of assembly, F-type ATPases have 2 components, F(1) - the catalytic core - and F(0) - the membrane proton channel. F(1) has five subunits: alpha(3), beta(3), gamma(1), delta(1), epsilon(1). F(0) has three main subunits: a(1), b(2) and c(10-14). The alpha and beta chains form an alternating ring which encloses part of the gamma chain. F(1) is attached to F(0) by a central stalk formed by the gamma and epsilon chains, while a peripheral stalk is formed by the delta and b chains.

Its subcellular location is the cell membrane. F(1)F(0) ATP synthase produces ATP from ADP in the presence of a proton or sodium gradient. F-type ATPases consist of two structural domains, F(1) containing the extramembraneous catalytic core and F(0) containing the membrane proton channel, linked together by a central stalk and a peripheral stalk. During catalysis, ATP synthesis in the catalytic domain of F(1) is coupled via a rotary mechanism of the central stalk subunits to proton translocation. In terms of biological role, this protein is part of the stalk that links CF(0) to CF(1). It either transmits conformational changes from CF(0) to CF(1) or is implicated in proton conduction. In Streptomyces avermitilis (strain ATCC 31267 / DSM 46492 / JCM 5070 / NBRC 14893 / NCIMB 12804 / NRRL 8165 / MA-4680), this protein is ATP synthase subunit delta.